A 287-amino-acid polypeptide reads, in one-letter code: tRNA uridine(34) hydroxylase (287 aa).

The Rhodanese domain maps to 132–226; that stretch reads EGRPVVMLDT…YFEEVGGAHY (95 aa). Catalysis depends on C186, which acts as the Cysteine persulfide intermediate.

Belongs to the TrhO family.

The enzyme catalyses uridine(34) in tRNA + AH2 + O2 = 5-hydroxyuridine(34) in tRNA + A + H2O. Functionally, catalyzes oxygen-dependent 5-hydroxyuridine (ho5U) modification at position 34 in tRNAs. The polypeptide is tRNA uridine(34) hydroxylase (Paraburkholderia xenovorans (strain LB400)).